Here is a 123-residue protein sequence, read N- to C-terminus: Large ribosomal subunit protein bL20 (123 aa).

It belongs to the bacterial ribosomal protein bL20 family.

Its function is as follows. Binds directly to 23S ribosomal RNA and is necessary for the in vitro assembly process of the 50S ribosomal subunit. It is not involved in the protein synthesizing functions of that subunit. The protein is Large ribosomal subunit protein bL20 of Chlamydia trachomatis serovar L2b (strain UCH-1/proctitis).